Consider the following 257-residue polypeptide: Imidazole glycerol phosphate synthase subunit HisF (257 aa).

Residues Asp11 and Asp130 contribute to the active site.

It belongs to the HisA/HisF family. Heterodimer of HisH and HisF.

The protein resides in the cytoplasm. The catalysed reaction is 5-[(5-phospho-1-deoxy-D-ribulos-1-ylimino)methylamino]-1-(5-phospho-beta-D-ribosyl)imidazole-4-carboxamide + L-glutamine = D-erythro-1-(imidazol-4-yl)glycerol 3-phosphate + 5-amino-1-(5-phospho-beta-D-ribosyl)imidazole-4-carboxamide + L-glutamate + H(+). It functions in the pathway amino-acid biosynthesis; L-histidine biosynthesis; L-histidine from 5-phospho-alpha-D-ribose 1-diphosphate: step 5/9. Its function is as follows. IGPS catalyzes the conversion of PRFAR and glutamine to IGP, AICAR and glutamate. The HisF subunit catalyzes the cyclization activity that produces IGP and AICAR from PRFAR using the ammonia provided by the HisH subunit. The chain is Imidazole glycerol phosphate synthase subunit HisF from Photobacterium profundum (strain SS9).